The chain runs to 86 residues: Large ribosomal subunit protein bL27c (86 aa).

The interval 1-27 is disordered; sequence MAHKKGSGSTRNGRDSNSKRLGVKKYG.

It belongs to the bacterial ribosomal protein bL27 family.

The protein localises to the plastid. The protein resides in the chloroplast. This Porphyra purpurea (Red seaweed) protein is Large ribosomal subunit protein bL27c (rpl27).